We begin with the raw amino-acid sequence, 273 residues long: Large ribosomal subunit protein uL2cz/uL2cy (273 aa).

Disordered stretches follow at residues 1–23 (MAIH…SQVK) and 224–273 (NPVD…RRRK). A compositionally biased stretch (basic and acidic residues) spans 262–273 (KYSDRFILRRRK).

This sequence belongs to the universal ribosomal protein uL2 family. In terms of assembly, part of the 50S ribosomal subunit.

The protein resides in the plastid. The protein localises to the chloroplast. In Acorus calamus var. americanus (American sweet flag), this protein is Large ribosomal subunit protein uL2cz/uL2cy (rpl2-A).